The primary structure comprises 389 residues: Chalcone synthase 3 (389 aa).

Cys-164 is an active-site residue.

This sequence belongs to the thiolase-like superfamily. Chalcone/stilbene synthases family.

The enzyme catalyses (E)-4-coumaroyl-CoA + 3 malonyl-CoA + 3 H(+) = 2',4,4',6'-tetrahydroxychalcone + 3 CO2 + 4 CoA. It functions in the pathway secondary metabolite biosynthesis; flavonoid biosynthesis. Its function is as follows. The primary product of this enzyme is 4,2',4',6'-tetrahydroxychalcone (also termed naringenin-chalcone or chalcone) which can under specific conditions spontaneously isomerize into naringenin. The chain is Chalcone synthase 3 (CHS3) from Pisum sativum (Garden pea).